We begin with the raw amino-acid sequence, 935 residues long: Bifunctional alpha-galactosidase/sucrose kinase AgaSK (935 aa).

Residues methionine 1–leucine 720 form an alpha-galactosidase region. Positions 176, 277, and 280 each coordinate Mg(2+). Residues aspartate 366 to aspartate 367, arginine 443, lysine 476 to asparagine 480, and cysteine 518 to glycine 521 contribute to the substrate site. Catalysis depends on aspartate 526, which acts as the Nucleophile. Aspartate 540 lines the substrate pocket. Glutamate 606 (proton donor/acceptor) is an active-site residue. Residues lysine 721–glutamine 935 are sucrose kinase. ATP-binding positions include glycine 748–serine 752 and alanine 824.

It in the N-terminal section; belongs to the glycosyl hydrolase 36 family. The protein in the C-terminal section; belongs to the uridine kinase family. In terms of assembly, homotetramer. The cofactor is Mg(2+).

The enzyme catalyses Hydrolysis of terminal, non-reducing alpha-D-galactose residues in alpha-D-galactosides, including galactose oligosaccharides, galactomannans and galactolipids.. In terms of biological role, bifunctional enzyme with alpha-galactosidase and sucrose kinase activities. Produces sucrose-6-phosphate directly from raffinose. Binds ATP. Phosphorylates sucrose specifically on the C6 position of glucose in the presence of ATP. Hydrolyzes melibiose, raffinose, stachyose and synthetic substrate p-nitrophenyl-alpha-D-galactopyranoside with high activity. Low activity against locust bean gum, guar gum and synthetic substrates xylose alpha-D-4-nitrophenol, glucose alpha-D-4-nitrophenol and o-nitrophenyl-alpha-D-galactopyranoside. In Mediterraneibacter gnavus (Ruminococcus gnavus), this protein is Bifunctional alpha-galactosidase/sucrose kinase AgaSK.